A 123-amino-acid polypeptide reads, in one-letter code: Large ribosomal subunit protein bL12 (123 aa).

This sequence belongs to the bacterial ribosomal protein bL12 family. Homodimer. Part of the ribosomal stalk of the 50S ribosomal subunit. Forms a multimeric L10(L12)X complex, where L10 forms an elongated spine to which 2 to 4 L12 dimers bind in a sequential fashion. Binds GTP-bound translation factors.

Functionally, forms part of the ribosomal stalk which helps the ribosome interact with GTP-bound translation factors. Is thus essential for accurate translation. The chain is Large ribosomal subunit protein bL12 from Borrelia duttonii (strain Ly).